Reading from the N-terminus, the 266-residue chain is Glutamate racemase (266 aa).

Residues aspartate 9–serine 10 and tyrosine 41–glycine 42 contribute to the substrate site. Cysteine 72 (proton donor/acceptor) is an active-site residue. Asparagine 73–threonine 74 provides a ligand contact to substrate. Catalysis depends on cysteine 183, which acts as the Proton donor/acceptor. Threonine 184–histidine 185 contributes to the substrate binding site.

Belongs to the aspartate/glutamate racemases family.

The catalysed reaction is L-glutamate = D-glutamate. It functions in the pathway cell wall biogenesis; peptidoglycan biosynthesis. Provides the (R)-glutamate required for cell wall biosynthesis. In Listeria monocytogenes serotype 4b (strain CLIP80459), this protein is Glutamate racemase.